Reading from the N-terminus, the 685-residue chain is Mitotic interactor and substrate of PLK1 (685 aa).

At S78 the chain carries Phosphoserine; by CDK1. Disordered regions lie at residues 155 to 181 (SGTVATLQAAPDHGDPRTPGPPRSTPL) and 207 to 253 (NKEV…QGKG). T172 carries the post-translational modification Phosphothreonine; by CDK1. T179 carries the post-translational modification Phosphothreonine. Residue S214 is modified to Phosphoserine; by CDK1. Phosphothreonine is present on T219. S284 carries the post-translational modification Phosphoserine; by CDK1. Position 287 is a phosphothreonine; by CDK1 (T287). Residues 345–499 (GRPSLYVQRD…PWKLPRGSPQ (155 aa)) form a disordered region. A Phosphoserine modification is found at S348. Residues 355 to 371 (MVQETQREEDHRREGLH) are compositionally biased toward basic and acidic residues. The residue at position 377 (T377) is a Phosphothreonine; by CDK1. Residue S382 is modified to Phosphoserine. A compositionally biased stretch (low complexity) spans 392–417 (ALSSDSILSPDSILSPAPDARAADPA). A phosphoserine; by PLK1 mark is found at S394, S395, and S397. Phosphoserine is present on residues S406 and S436. A compositionally biased stretch (polar residues) spans 454 to 469 (SGLSTVDTEAATSPKA). A Phosphoserine; by PLK1 modification is found at S477. Polar residues predominate over residues 478-488 (ESSGKPMSTKQ). Residues S547 and S549 each carry the phosphoserine modification. Positions 551 to 575 (DLLERERESVLRREREVAEERRNAL) form a coiled coil. 2 disordered regions span residues 575–607 (LFPEVFSPTPDESCDQNSRSSSQASGITGSYSV) and 629–651 (PVDSAPPGQRKKEQWYAGINPSD). The residue at position 581 (S581) is a Phosphoserine; by PLK1. The residue at position 583 (T583) is a Phosphothreonine. The span at 589–607 (DQNSRSSSQASGITGSYSV) shows a compositional bias: polar residues. A Phosphoserine; by PLK1 modification is found at S592. Phosphoserine is present on S681.

It belongs to the MISP family. As to quaternary structure, associates with F-actin. Interacts with DCTN1; this interaction regulates DCTN1 distribution at the cell cortex. Interacts with PTK2/FAK and MAPRE1. Post-translationally, phosphorylated by CDK1 and PLK1. CDK1 is the priming kinase for PLK1 phosphorylation. Phosphorylation by PLK1 is required for proper spindle orientation at metaphase.

The protein resides in the cell junction. It is found in the focal adhesion. It localises to the cytoplasm. Its subcellular location is the cytoskeleton. The protein localises to the cell cortex. Functionally, plays a role in mitotic spindle orientation and mitotic progression. Regulates the distribution of dynactin at the cell cortex in a PLK1-dependent manner, thus stabilizing cortical and astral microtubule attachments required for proper mitotic spindle positioning. May link microtubules to the actin cytospkeleton and focal adhesions. May be required for directed cell migration and centrosome orientation. May also be necessary for proper stacking of the Golgi apparatus. The polypeptide is Mitotic interactor and substrate of PLK1 (Pongo abelii (Sumatran orangutan)).